Reading from the N-terminus, the 120-residue chain is Large ribosomal subunit protein uL24 (120 aa).

Belongs to the universal ribosomal protein uL24 family. Part of the 50S ribosomal subunit.

Functionally, one of two assembly initiator proteins, it binds directly to the 5'-end of the 23S rRNA, where it nucleates assembly of the 50S subunit. In terms of biological role, located at the polypeptide exit tunnel on the outside of the subunit. The sequence is that of Large ribosomal subunit protein uL24 from Archaeoglobus fulgidus (strain ATCC 49558 / DSM 4304 / JCM 9628 / NBRC 100126 / VC-16).